Reading from the N-terminus, the 196-residue chain is Molybdenum cofactor guanylyltransferase (196 aa).

Residues 10–12 (LAG), Lys-23, Asn-51, Asp-69, and Asp-99 contribute to the GTP site. Asp-99 provides a ligand contact to Mg(2+).

The protein belongs to the MobA family. As to quaternary structure, monomer. Requires Mg(2+) as cofactor.

It is found in the cytoplasm. It catalyses the reaction Mo-molybdopterin + GTP + H(+) = Mo-molybdopterin guanine dinucleotide + diphosphate. In terms of biological role, transfers a GMP moiety from GTP to Mo-molybdopterin (Mo-MPT) cofactor (Moco or molybdenum cofactor) to form Mo-molybdopterin guanine dinucleotide (Mo-MGD) cofactor. This chain is Molybdenum cofactor guanylyltransferase, found in Shewanella baltica (strain OS185).